We begin with the raw amino-acid sequence, 281 residues long: MTQLNVVNDINHAGNWLIRNQELLLSYIINLISSIIILIIGFFAAKIISNLINKVLITQKIDTTIANFLAALVRYIIITFALIASLGCIGVQTTSVIAILGAAGMAIGLALQGSLSNFAAGVLLVILRPFRTGEYVNLEKISGTVLNIHVFYTTFRTLDGKIVVIPNGKIISGNIINYSREKARRNEFIIGVSYDSDIDKVIKILKNVVKNEKRVLKDRDIIVGLSELAPSSLNFIVRCWSHTDDINIVYWDLMVKFKKALDSNNINIPYPQFDINLKKKY.

A run of 3 helical transmembrane segments spans residues 23 to 45 (LLLS…FFAA), 65 to 87 (IANF…ASLG), and 94 to 116 (TSVI…GSLS).

Belongs to the MscS (TC 1.A.23) family.

It is found in the cell membrane. This is an uncharacterized protein from Buchnera aphidicola subsp. Baizongia pistaciae (strain Bp).